Consider the following 212-residue polypeptide: 2',3'-cyclic-nucleotide 3'-phosphodiesterase (212 aa).

Residue histidine 51 is the Proton donor/acceptor of the active site. Threonine 53 contributes to the substrate binding site. Catalysis depends on histidine 146, which acts as the Proton donor/acceptor. Substrate-binding residues include serine 148 and tyrosine 151.

This sequence belongs to the 2H phosphoesterase superfamily. CPD1 family.

It localises to the golgi apparatus. It catalyses the reaction a nucleoside 2',3'-cyclic phosphate + H2O = a nucleoside 2'-phosphate + H(+). Involved in the metabolism of ADP-ribose 1',2'-cyclic phosphate which is produced as a consequence of tRNA splicing. The polypeptide is 2',3'-cyclic-nucleotide 3'-phosphodiesterase (cpd-7) (Neurospora crassa (strain ATCC 24698 / 74-OR23-1A / CBS 708.71 / DSM 1257 / FGSC 987)).